The primary structure comprises 364 residues: MDRSNREHHSHRDHREHRDSKEPPTMAFHMKTWKTINKPLRAFAKLLRENTTVTFTPQPAIIIQSAKNHLVLKLIIHAECLYITDTDHFSTKTINNFVPLFDSFMGIISNPDVTKLYIQHDSDLYTRFLVTASDICAQASIPCVNGQEIVRESGKSALRIDLDHSTVTEILKWLAPVTKNKRSNKNEMTLAQIVVQVNPPSIKFLTDLNEIEFAHSGKVVFHDAKCMRLVLSSKNLQQAFSTCAVLKSSCSLRAIAGKEYKLFLIAKNVFLTVEAYLSQEQVKDDPKFERQAKTEEKGEKNHKVEEGNNFFCKQETQHKITSYMVPTKNGGTGTNFFNEKEDSESDDSAHFDYTPNSKRQRCGM.

3 disordered regions span residues 1 to 24 (MDRSNREHHSHRDHREHRDSKEPP), 284 to 306 (DDPKFERQAKTEEKGEKNHKVEE), and 325 to 364 (VPTKNGGTGTNFFNEKEDSESDDSAHFDYTPNSKRQRCGM).

It belongs to the herpesviridae polymerase accessory protein family.

Functionally, accessory subunit of the DNA polymerase that acts to increase the processivity of polymerization. The sequence is that of DNA polymerase processivity factor (U27) from Homo sapiens (Human).